We begin with the raw amino-acid sequence, 383 residues long: Succinyl-diaminopimelate desuccinylase (383 aa).

Histidine 74 provides a ligand contact to Zn(2+). Aspartate 76 is a catalytic residue. Aspartate 107 contacts Zn(2+). Glutamate 141 serves as the catalytic Proton acceptor. Residues glutamate 142, glutamate 170, and histidine 356 each coordinate Zn(2+).

This sequence belongs to the peptidase M20A family. DapE subfamily. Homodimer. The cofactor is Zn(2+). Co(2+) is required as a cofactor.

It catalyses the reaction N-succinyl-(2S,6S)-2,6-diaminopimelate + H2O = (2S,6S)-2,6-diaminopimelate + succinate. It functions in the pathway amino-acid biosynthesis; L-lysine biosynthesis via DAP pathway; LL-2,6-diaminopimelate from (S)-tetrahydrodipicolinate (succinylase route): step 3/3. Its function is as follows. Catalyzes the hydrolysis of N-succinyl-L,L-diaminopimelic acid (SDAP), forming succinate and LL-2,6-diaminopimelate (DAP), an intermediate involved in the bacterial biosynthesis of lysine and meso-diaminopimelic acid, an essential component of bacterial cell walls. In Cupriavidus pinatubonensis (strain JMP 134 / LMG 1197) (Cupriavidus necator (strain JMP 134)), this protein is Succinyl-diaminopimelate desuccinylase.